The chain runs to 481 residues: 5-hydroxytryptamine receptor 2B (481 aa).

Topologically, residues 1-56 (MALSYRVSELQSTIPEHILQSTFVHVISSNWSGLQTESIPEEMKQIVEEQGNKLHW) are extracellular. Residue Asn30 is glycosylated (N-linked (GlcNAc...) asparagine). A helical membrane pass occupies residues 57–79 (AALLILMVIIPTIGGNTLVILAV). The Cytoplasmic portion of the chain corresponds to 80–90 (SLEKKLQYATN). The chain crosses the membrane as a helical span at residues 91-113 (YFLMSLAVADLLVGLFVMPIALL). Residues 114–129 (TIMFEAMWPLPLVLCP) are Extracellular-facing. A disulfide bridge connects residues Cys128 and Cys207. The helical transmembrane segment at 130–151 (AWLFLDVLFSTASIMHLCAISV) threads the bilayer. Residues Asp135 and Thr140 each coordinate ergotamine. The DRY motif; important for ligand-induced conformation changes signature appears at 152–154 (DRY). Over 152–171 (DRYIAIKKPIQANQYNSRAT) the chain is Cytoplasmic. The chain crosses the membrane as a helical span at residues 172 to 192 (AFIKITVVWLISIGIAIPVPI). Residues 193 to 216 (KGIETDVDNPNNITCVLTKERFGD) lie on the Extracellular side of the membrane. Leu209 provides a ligand contact to ergotamine. A [DE]RFG motif; may stabilize a conformation that preferentially activates signaling via beta-arrestin family members motif is present at residues 212 to 215 (ERFG). The helical transmembrane segment at 217 to 239 (FMLFGSLAAFFTPLAIMIVTYFL) threads the bilayer. Topologically, residues 240–324 (TIHALQKKAY…TISNEQRASK (85 aa)) are cytoplasmic. Residues 325 to 345 (VLGIVFFLFLLMWCPFFITNI) traverse the membrane as a helical segment. Over 346–360 (TLVLCDSCNQTTLQM) the chain is Extracellular. Residues Cys350 and Cys353 are joined by a disulfide bond. A helical membrane pass occupies residues 361–382 (LLEIFVWIGYVSSGVNPLVYTL). The NPxxY motif; important for ligand-induced conformation changes and signaling motif lies at 376–380 (NPLVY). At 383 to 481 (FNKTFRDAFG…DKTEEQVSYV (99 aa)) the chain is on the cytoplasmic side. Cys397 carries the S-palmitoyl cysteine lipid modification. The PDZ-binding motif lies at 479–481 (SYV).

It belongs to the G-protein coupled receptor 1 family. Interacts (via C-terminus) with MPDZ. Ubiquitous. Detected in liver, kidney, heart, pulmonary artery, and intestine. Detected at lower levels in blood, placenta and brain, especially in cerebellum, occipital cortex and frontal cortex.

Its subcellular location is the cell membrane. It is found in the synapse. The protein resides in the synaptosome. In terms of biological role, G-protein coupled receptor for 5-hydroxytryptamine (serotonin). Also functions as a receptor for various ergot alkaloid derivatives and psychoactive substances. Ligand binding causes a conformation change that triggers signaling via guanine nucleotide-binding proteins (G proteins) and modulates the activity of downstream effectors. HTR2B is coupled to G(q)/G(11) G alpha proteins and activates phospholipase C-beta, releasing diacylglycerol (DAG) and inositol 1,4,5-trisphosphate (IP3) second messengers that modulate the activity of phosphatidylinositol 3-kinase and promote the release of Ca(2+) ions from intracellular stores, respectively. Beta-arrestin family members inhibit signaling via G proteins and mediate activation of alternative signaling pathways. Plays a role in the regulation of dopamine and 5-hydroxytryptamine release, 5-hydroxytryptamine uptake and in the regulation of extracellular dopamine and 5-hydroxytryptamine levels, and thereby affects neural activity. May play a role in the perception of pain. Plays a role in the regulation of behavior, including impulsive behavior. Required for normal proliferation of embryonic cardiac myocytes and normal heart development. Protects cardiomyocytes against apoptosis. Plays a role in the adaptation of pulmonary arteries to chronic hypoxia. Plays a role in vasoconstriction. Required for normal osteoblast function and proliferation, and for maintaining normal bone density. Required for normal proliferation of the interstitial cells of Cajal in the intestine. The polypeptide is 5-hydroxytryptamine receptor 2B (Homo sapiens (Human)).